The following is a 617-amino-acid chain: UvrABC system protein C (617 aa).

One can recognise a GIY-YIG domain in the interval 22-100; sequence KLPGVYRFFD…IKALSPKYNI (79 aa). In terms of domain architecture, UVR spans 209-244; it reads DELTRTLQHKMQTAAANLQFEEAARYRDQIQALGII.

Belongs to the UvrC family. As to quaternary structure, interacts with UvrB in an incision complex.

It is found in the cytoplasm. The UvrABC repair system catalyzes the recognition and processing of DNA lesions. UvrC both incises the 5' and 3' sides of the lesion. The N-terminal half is responsible for the 3' incision and the C-terminal half is responsible for the 5' incision. The polypeptide is UvrABC system protein C (Neisseria gonorrhoeae (strain ATCC 700825 / FA 1090)).